The primary structure comprises 86 residues: MAIKLINIGFGNIVNANRIISIVSPESAPIKRIIQEARDRNMLVDATYGRRTRAVIITDSDHVILSAVQPETVAQRLTTKDDESDE.

This sequence belongs to the RemA family.

The sequence is that of Putative regulatory protein BBR47_37350 from Brevibacillus brevis (strain 47 / JCM 6285 / NBRC 100599).